The following is a 163-amino-acid chain: Retinoic acid receptor responder protein 2 (163 aa).

Residues 1–20 (MRRLLIPLALWLGAVGVGVA) form the signal peptide. Cystine bridges form between cysteine 77/cysteine 87, cysteine 98/cysteine 117, and cysteine 101/cysteine 135. A propeptide spanning residues 158 to 163 (KALPRS) is cleaved from the precursor.

Secreted in an inactive precursor form, prochemerin, which is proteolytically processed by a variety of extracellular proteases to generate forms with differing levels of bioactivity. For example, the removal of six amino acids results in chemerin-157, which exhibits the highest activity, while removal of seven amino acids results in chemerin-156 which has slightly less activity. Some proteases are able to cleave at more than one site and chemerin forms may be sequentially processed by different enzymes to modulate activity levels. The coordinated expression and activity of chemerin-modifying enzymes is essential for regulating its bioactivation, inactivation and, consequently, biological function. Cathepsin G cleaves seven C-terminal amino acids from prochemerin (chemerin-156), elastase is able to cleave six (chemerin-157), eight (chemerin-155) or eleven (chemerin-152), plasmin cleaves five amino acids (chemerin-158), and tryptase cleaves five (chemerin-158) or eight (chemerin-155). Multiple cleavages might be required to fully activate chemerin, with an initial tryptase cleavage resulting in chemerin with low activity (chemerin-158), and a second cleavage by carboxypeptidase N or B producing highly active chemerin (chemerin-157).

The protein localises to the secreted. Its function is as follows. Adipocyte-secreted protein (adipokine) that regulates adipogenesis, metabolism and inflammation through activation of the chemokine-like receptor 1 (CMKLR1). Also acts as a ligand for CMKLR2. Can also bind to C-C chemokine receptor-like 2 (CCRL2), but with a lower affinity than it does to CMKLR1 or CMKLR2. Positively regulates adipocyte differentiation, modulates the expression of adipocyte genes involved in lipid and glucose metabolism and might play a role in angiogenesis, a process essential for the expansion of white adipose tissue. Also acts as a pro-inflammatory adipokine, causing an increase in secretion of pro-inflammatory and prodiabetic adipokines, which further impair adipose tissue metabolic function and have negative systemic effects including impaired insulin sensitivity, altered glucose and lipid metabolism, and a decrease in vascular function in other tissues. Can have both pro- and anti-inflammatory properties depending on the modality of enzymatic cleavage by different classes of proteases. Acts as a chemotactic factor for leukocyte populations expressing CMKLR1, particularly immature plasmacytoid dendritic cells, but also immature myeloid DCs, macrophages and natural killer cells. Exerts an anti-inflammatory role by preventing TNF/TNFA-induced VCAM1 expression and monocytes adhesion in vascular endothelial cells. The effect is mediated via inhibiting activation of NF-kappa-B and CRK/p38 through stimulation of AKT1/NOS3 signaling and nitric oxide production. Exhibits an antimicrobial function in the skin. The polypeptide is Retinoic acid receptor responder protein 2 (RARRES2) (Pongo abelii (Sumatran orangutan)).